The primary structure comprises 436 residues: Trigger factor (436 aa).

A PPIase FKBP-type domain is found at 161-246; that stretch reads EDQLNIDFVG…VNTVSEPKLP (86 aa).

This sequence belongs to the FKBP-type PPIase family. Tig subfamily.

It is found in the cytoplasm. It carries out the reaction [protein]-peptidylproline (omega=180) = [protein]-peptidylproline (omega=0). Involved in protein export. Acts as a chaperone by maintaining the newly synthesized protein in an open conformation. Functions as a peptidyl-prolyl cis-trans isomerase. The chain is Trigger factor from Pseudomonas fluorescens (strain Pf0-1).